The following is a 214-amino-acid chain: Thymidylate kinase (214 aa).

10 to 17 lines the ATP pocket; it reads GGEGAGKS.

The protein belongs to the thymidylate kinase family.

The enzyme catalyses dTMP + ATP = dTDP + ADP. Functionally, phosphorylation of dTMP to form dTDP in both de novo and salvage pathways of dTTP synthesis. This Brucella suis biovar 1 (strain 1330) protein is Thymidylate kinase.